The chain runs to 570 residues: Glutamate--tRNA ligase (570 aa).

The short motif at P107–S117 is the 'HIGH' region element.

This sequence belongs to the class-I aminoacyl-tRNA synthetase family. Glutamate--tRNA ligase type 2 subfamily.

The protein localises to the cytoplasm. It catalyses the reaction tRNA(Glu) + L-glutamate + ATP = L-glutamyl-tRNA(Glu) + AMP + diphosphate. Functionally, catalyzes the attachment of glutamate to tRNA(Glu) in a two-step reaction: glutamate is first activated by ATP to form Glu-AMP and then transferred to the acceptor end of tRNA(Glu). In Pyrobaculum aerophilum (strain ATCC 51768 / DSM 7523 / JCM 9630 / CIP 104966 / NBRC 100827 / IM2), this protein is Glutamate--tRNA ligase.